A 75-amino-acid polypeptide reads, in one-letter code: Large ribosomal subunit protein bL31c (75 aa).

It belongs to the bacterial ribosomal protein bL31 family. Type A subfamily. In terms of assembly, part of the 50S ribosomal subunit.

Its subcellular location is the plastid. The protein localises to the chloroplast. Binds the 23S rRNA. The sequence is that of Large ribosomal subunit protein bL31c from Cyanidium caldarium (Red alga).